The sequence spans 307 residues: N-acetylglucosaminyl-diphospho-decaprenol L-rhamnosyltransferase (307 aa).

It belongs to the glycosyltransferase 2 family. Mn(2+) serves as cofactor. The cofactor is Mg(2+).

The catalysed reaction is N-acetyl-alpha-D-glucosaminyl-1-diphospho-trans,octa-cis-decaprenol + dTDP-beta-L-rhamnose = alpha-L-rhamnosyl-(1-&gt;3)-N-acetyl-alpha-D-glucosaminyl-diphospho-trans,octa-cis-decaprenol + dTDP + H(+). Involved in the biosynthesis of the mycolylarabinogalactan-peptidoglycan (mAGP) complex, an essential component of the mycobacterial cell wall. Catalyzes the transfer of the rhamnosyl moiety from dTDP-rhamnosyl (dTDP-Rha) onto the decaprenyl-pyrophosphoryl-GlcNAc (C50-PP-GlcNAc), yielding rhamnosyl-decaprenyl-pyrophosphoryl-GlcNAc (Rha-C50-PP-GlcNAc). The chain is N-acetylglucosaminyl-diphospho-decaprenol L-rhamnosyltransferase (wbbL) from Mycobacterium tuberculosis (strain CDC 1551 / Oshkosh).